Consider the following 601-residue polypeptide: Keratin, type II cytoskeletal 5 (601 aa).

Positions 1–168 are head; it reads MSRQSTVSFR…DPTIQRVRTE (168 aa). Phosphoserine occurs at positions 5, 8, 16, and 21. At Thr-24 the chain carries Phosphothreonine; by CDK1. 6 positions are modified to phosphoserine: Ser-26, Ser-36, Ser-50, Ser-64, Ser-71, and Ser-75. Thr-152 is subject to Phosphothreonine; by CDK1. Residue Thr-167 is modified to Phosphothreonine; by AURKB. Residues 169–204 form a coil 1A region; sequence EREQIKTLNNKFASFIDKVRFLEQQNKVLDTKWALL. Residues 169–482 enclose the IF rod domain; that stretch reads EREQIKTLNN…KLLEGEECRL (314 aa). The segment at 205–223 is linker 1; that stretch reads QEQGTKTVRQNLEPLLEQY. Residues 224–316 form a coil 1B region; that stretch reads INNLRRQLDG…FFDAELSQMQ (93 aa). The linker 12 stretch occupies residues 317–339; sequence THVSDTSVVLSMDNNRSLDLDSI. Residues 340 to 478 are coil 2; sequence IAEVKAQYED…ATYRKLLEGE (139 aa). Positions 479–601 are tail; the sequence is ECRLSGEGVG…TSSSRKSFKS (123 aa). A disordered region spans residues 576–601; that stretch reads FGSGGGSSSSVKFVSTTSSSRKSFKS. Over residues 583-601 the composition is skewed to low complexity; it reads SSSVKFVSTTSSSRKSFKS.

The protein belongs to the intermediate filament family. Heterodimer of a type I and a type II keratin. Heterodimer with type I keratin KRT25 leading to the formation of keratin intermediate filament (KIF) network. Forms a heterodimer (via 2B domains) with KRT14 (via 2B domains). Interacts with TCHP. Interacts with EPPK1. Interacts with AMELX. Interacts with PKP1 (via N-terminus) and PKP2. Phosphorylated by CDK1, AURKB and Rho-kinase, phosphorylation is regulated by the cell cycle. Thr-24 phosphorylation, mediated by CDK1, peaks during prometaphase or metaphase cells with phosphorylated filamentous structures evident throughout the cytoplasm early mitosis. CDK1 phosphorylates Thr-24 in mitotic cells at the site of injury. In terms of processing, O-glycosylated.

It is found in the cytoplasm. Required for the formation of keratin intermediate filaments in the basal epidermis and maintenance of the skin barrier in response to mechanical stress. Regulates the recruitment of Langerhans cells to the epidermis, potentially by modulation of the abundance of macrophage chemotactic cytokines, macrophage inflammatory cytokines and CTNND1 localization in keratinocytes. In Bos taurus (Bovine), this protein is Keratin, type II cytoskeletal 5.